The chain runs to 123 residues: Small ribosomal subunit protein uS12 (123 aa).

Aspartate 89 bears the 3-methylthioaspartic acid mark.

This sequence belongs to the universal ribosomal protein uS12 family. Part of the 30S ribosomal subunit. Contacts proteins S8 and S17. May interact with IF1 in the 30S initiation complex.

Functionally, with S4 and S5 plays an important role in translational accuracy. Its function is as follows. Interacts with and stabilizes bases of the 16S rRNA that are involved in tRNA selection in the A site and with the mRNA backbone. Located at the interface of the 30S and 50S subunits, it traverses the body of the 30S subunit contacting proteins on the other side and probably holding the rRNA structure together. The combined cluster of proteins S8, S12 and S17 appears to hold together the shoulder and platform of the 30S subunit. This is Small ribosomal subunit protein uS12 from Afipia carboxidovorans (strain ATCC 49405 / DSM 1227 / KCTC 32145 / OM5) (Oligotropha carboxidovorans).